Reading from the N-terminus, the 101-residue chain is Large ribosomal subunit protein uL24 (101 aa).

This sequence belongs to the universal ribosomal protein uL24 family. Part of the 50S ribosomal subunit.

In terms of biological role, one of two assembly initiator proteins, it binds directly to the 5'-end of the 23S rRNA, where it nucleates assembly of the 50S subunit. One of the proteins that surrounds the polypeptide exit tunnel on the outside of the subunit. This is Large ribosomal subunit protein uL24 from Streptococcus sanguinis (strain SK36).